The following is a 441-amino-acid chain: tRNA (guanine(37)-N(1))-methyltransferase (441 aa).

Residues Met1–Ala9 constitute a mitochondrion transit peptide. S-adenosyl-L-methionine contacts are provided by residues Arg221, Asp248–Leu249, Asp276–Gly277, and Asn331.

This sequence belongs to the class I-like SAM-binding methyltransferase superfamily. TRM5/TYW2 family. As to quaternary structure, monomer.

It is found in the mitochondrion matrix. The protein localises to the nucleus. The protein resides in the cytoplasm. It catalyses the reaction guanosine(37) in tRNA + S-adenosyl-L-methionine = N(1)-methylguanosine(37) in tRNA + S-adenosyl-L-homocysteine + H(+). In terms of biological role, specifically methylates the N1 position of guanosine-37 in various cytoplasmic and mitochondrial tRNAs. Methylation is not dependent on the nature of the nucleoside 5' of the target nucleoside. This is the first step in the biosynthesis of wybutosine (yW), a modified base adjacent to the anticodon of tRNAs and required for accurate decoding. The polypeptide is tRNA (guanine(37)-N(1))-methyltransferase (Phaeosphaeria nodorum (strain SN15 / ATCC MYA-4574 / FGSC 10173) (Glume blotch fungus)).